We begin with the raw amino-acid sequence, 800 residues long: MSSLGASFVQIKFDDLQFFENCGGGSFGSVYRAKWISQDKEVAVKKLLKIEKEAEILSVLSHRNIIQFYGVILEPPNYGIVTEYASLGSLYDYINSNRSEEMDMDHIMTWATDVAKGMHYLHMEAPVKVIHRDLKSRNVVIAADGVLKICDFGASRFHNHTTHMSLVGTFPWMAPEVIQSLPVSETCDTYSYGVVLWEMLTREVPFKGLEGLQVAWLVVEKNERLTIPSSCPRSFAELLHQCWEADAKKRPSFKQIISILESMSNDTSLPDKCNSFLHNKAEWRCEIEATLERLKKLERDLSFKEQELKERERRLKMWEQKLTEQSNTPLLPSFEIGAWTEDDVYCWVQQLVRKGDSSAEMSVYASLFKENNITGKRLLLLEEEDLKDMGIVSKGHIIHFKSAIEKLTHDYINLFHFPPLIKDSGGEPEENEEKIVNLELVFGFHLKPGTGPQDCKWKMYMEMDGDEIAITYIKDVTFNTNLPDAEILKMTKPPFVMEKWIVGIAKSQTVECTVTYESDVRTPKSTKHVHSIQWSRTKPQDEVKAVQLAIQTLFTNSDGNPGSRSDSSADCQWLDTLRMRQIASNTSLQRSQSNPILGSPFFSHFDGQDSYAAAVRRPQVPIKYQQITPVNQSRSSSPTQYGLTKNFSSLHLNSRDSGFSSGNTDTSSERGRYSDRSRNKYGRGSISLNSSPRGRYSGKSQHSTPSRGRYPGKFYRVSQSALNPHQSPDFKRSPRDLHQPNTIPGMPLHPETDSRASEEDSKVSEGGWTKVEYRKKPHRPSPAKTNKERARGDHRGWRNF.

An N-acetylserine modification is found at Ser2. Residues Ser2, Ser3, and Ser7 each carry the phosphoserine; by autocatalysis modification. Residues 16–277 (LQFFENCGGG…SLPDKCNSFL (262 aa)) enclose the Protein kinase domain. ATP is bound by residues 22 to 30 (CGGGSFGSV) and Lys45. Asp133 serves as the catalytic Proton acceptor. Thr161 carries the post-translational modification Phosphothreonine; by autocatalysis. Phosphoserine; by autocatalysis is present on Ser165. Phosphoserine is present on Ser275. Residues 287–308 (IEATLERLKKLERDLSFKEQEL) are leucine-zipper. Phosphoserine; by autocatalysis is present on Ser302. Phosphoserine occurs at positions 339, 429, 434, 454, and 567. Residues 339 to 410 (WTEDDVYCWV…KSAIEKLTHD (72 aa)) form the SAM domain. Position 586 is a phosphothreonine; by autocatalysis (Thr586). The residue at position 587 (Ser587) is a Phosphoserine; by autocatalysis. Ser593 and Ser599 each carry phosphoserine. A Phosphothreonine modification is found at Thr628. 3 positions are modified to phosphoserine: Ser633, Ser637, and Ser648. 2 positions are modified to phosphoserine; by autocatalysis: Ser649 and Ser660. Polar residues predominate over residues 652 to 666 (LNSRDSGFSSGNTDT). Residues 652-800 (LNSRDSGFSS…RGDHRGWRNF (149 aa)) are disordered. Phosphothreonine; by autocatalysis is present on Thr664. Residues 667–678 (SSERGRYSDRSR) are compositionally biased toward basic and acidic residues. Residues 670 to 713 (RGRYSDRSRNKYGRGSISLNSSPRGRYSGKSQHSTPSRGRYPGK) form a sensing domain (S) region. At Ser685 the chain carries Phosphoserine. Polar residues-rich tracts occupy residues 686 to 706 (ISLN…STPS) and 717 to 726 (VSQSALNPHQ). Phosphoserine; by autocatalysis occurs at positions 718 and 720. Residues Ser727 and Ser733 each carry the phosphoserine modification. Residues 728–738 (PDFKRSPRDLH) are compositionally biased toward basic and acidic residues. A Phosphothreonine; by autocatalysis modification is found at Thr742. 2 stretches are compositionally biased toward basic and acidic residues: residues 750-763 (PETD…DSKV) and 785-800 (TNKE…WRNF). Residues 774 to 800 (RKKPHRPSPAKTNKERARGDHRGWRNF) are C-terminal domain (CTD).

It belongs to the protein kinase superfamily. STE Ser/Thr protein kinase family. MAP kinase kinase kinase subfamily. In terms of assembly, homodimer. Interacts with ZNF33A. Component of a signaling complex containing at least AKAP13, PKN1, MAPK14, MAP3K20 and MAP2K3. Within this complex, AKAP13 interacts directly with PKN1, which in turn recruits MAPK14, MAP2K3 and MAP3K20. Interacts with EIF2AK4/GCN2; promoting EIF2AK4/GCN2 kinase activity. As to quaternary structure, interacts with isoform ZAKbeta. Interacts with isoform ZAKalpha. Mg(2+) serves as cofactor. In terms of processing, activated by phosphorylation by PKN1, followed by autophosphorylation on Thr-161 and Ser-165. Autophosphorylation in response to ribotoxic stress promotes dissociation from colliding ribosomes and activation. As to expression, ubiquitously expressed. Isoform ZAKbeta is the predominant form in all tissues examined, except for liver, in which isoform ZAKalpha is more highly expressed.

The protein localises to the cytoplasm. The protein resides in the nucleus. The catalysed reaction is L-seryl-[protein] + ATP = O-phospho-L-seryl-[protein] + ADP + H(+). The enzyme catalyses L-threonyl-[protein] + ATP = O-phospho-L-threonyl-[protein] + ADP + H(+). Its activity is regulated as follows. Activated in response to stress, such as ribosomal stress, osmotic shock and ionizing radiation. Activated by phosphorylation by PKN1, followed by autophosphorylation on Thr-161 and Ser-165. Inhibited by nilotinib, sorafenib, dabrafenib, rebastinib and vemurafenib. Selectively inhibited by N-(3)-((1H-Pyrazolo[3,4-b]pyridin-5-yl)ethynyl)benzenesulfonamide compound 3h. Selectively inhibited by 1,2,3-triazole benzenesulfonamides. In terms of biological role, stress-activated component of a protein kinase signal transduction cascade that promotes programmed cell death in response to various stress, such as ribosomal stress, osmotic shock and ionizing radiation. Acts by catalyzing phosphorylation of MAP kinase kinases, leading to activation of the JNK (MAPK8/JNK1, MAPK9/JNK2 and/or MAPK10/JNK3) and MAP kinase p38 (MAPK11, MAPK12, MAPK13 and/or MAPK14) pathways. Activates JNK through phosphorylation of MAP2K4/MKK4 and MAP2K7/MKK7, and MAP kinase p38 gamma (MAPK12) via phosphorylation of MAP2K3/MKK3 and MAP2K6/MKK6. Involved in stress associated with adrenergic stimulation: contributes to cardiac decompensation during periods of acute cardiac stress. May be involved in regulation of S and G2 cell cycle checkpoint by mediating phosphorylation of CHEK2. Functionally, key component of the stress-activated protein kinase signaling cascade in response to ribotoxic stress or UV-B irradiation. Acts as the proximal sensor of ribosome collisions during the ribotoxic stress response (RSR): directly binds to the ribosome by inserting its flexible C-terminus into the ribosomal intersubunit space, thereby acting as a sentinel for colliding ribosomes. Upon ribosome collisions, activates either the stress-activated protein kinase signal transduction cascade or the integrated stress response (ISR), leading to programmed cell death or cell survival, respectively. Dangerous levels of ribosome collisions trigger the autophosphorylation and activation of MAP3K20, which dissociates from colliding ribosomes and phosphorylates MAP kinase kinases, leading to activation of the JNK and MAP kinase p38 pathways that promote programmed cell death. Less dangerous levels of ribosome collisions trigger the integrated stress response (ISR): MAP3K20 activates EIF2AK4/GCN2 independently of its protein-kinase activity, promoting EIF2AK4/GCN2-mediated phosphorylation of EIF2S1/eIF-2-alpha. Also part of the stress-activated protein kinase signaling cascade triggering the NLRP1 inflammasome in response to UV-B irradiation: ribosome collisions activate MAP3K20, which directly phosphorylates NLRP1, leading to activation of the NLRP1 inflammasome and subsequent pyroptosis. NLRP1 is also phosphorylated by MAP kinase p38 downstream of MAP3K20. Also acts as a histone kinase by phosphorylating histone H3 at 'Ser-28' (H3S28ph). Isoform that lacks the C-terminal region that mediates ribosome-binding: does not act as a sensor of ribosome collisions in response to ribotoxic stress. May act as an antagonist of isoform ZAKalpha: interacts with isoform ZAKalpha, leading to decrease the expression of isoform ZAKalpha. This chain is Mitogen-activated protein kinase kinase kinase 20, found in Homo sapiens (Human).